The sequence spans 216 residues: 4-hydroxy-tetrahydrodipicolinate reductase (216 aa).

Residues 9–12 (SGRM), 71–73 (GTT), and 95–98 (AYNF) each bind NAD(+). His-127 acts as the Proton donor/acceptor in catalysis. His-128 is a binding site for (S)-2,3,4,5-tetrahydrodipicolinate. An NAD(+)-binding site is contributed by Lys-131. The active-site Proton donor is the Lys-131. 137–138 (GT) provides a ligand contact to (S)-2,3,4,5-tetrahydrodipicolinate.

Belongs to the DapB family. As to quaternary structure, homotetramer.

Its subcellular location is the cytoplasm. It carries out the reaction (S)-2,3,4,5-tetrahydrodipicolinate + NAD(+) + H2O = (2S,4S)-4-hydroxy-2,3,4,5-tetrahydrodipicolinate + NADH + H(+). It catalyses the reaction (S)-2,3,4,5-tetrahydrodipicolinate + NADP(+) + H2O = (2S,4S)-4-hydroxy-2,3,4,5-tetrahydrodipicolinate + NADPH + H(+). Its pathway is amino-acid biosynthesis; L-lysine biosynthesis via DAP pathway; (S)-tetrahydrodipicolinate from L-aspartate: step 4/4. Its activity is regulated as follows. Is inhibited by high concentrations of NADH. Its function is as follows. Catalyzes the conversion of 4-hydroxy-tetrahydrodipicolinate (HTPA) to tetrahydrodipicolinate. Uses NADPH as a reductant with much more efficiency than NADH. The polypeptide is 4-hydroxy-tetrahydrodipicolinate reductase (Thermotoga maritima (strain ATCC 43589 / DSM 3109 / JCM 10099 / NBRC 100826 / MSB8)).